The chain runs to 185 residues: Guanylate kinase (185 aa).

The 179-residue stretch at 3–181 (TRMIIVAAPS…SYGEFKKIVE (179 aa)) folds into the Guanylate kinase-like domain. 10–17 (APSGAGKS) provides a ligand contact to ATP.

This sequence belongs to the guanylate kinase family.

It is found in the cytoplasm. It carries out the reaction GMP + ATP = GDP + ADP. Its function is as follows. Essential for recycling GMP and indirectly, cGMP. In Bdellovibrio bacteriovorus (strain ATCC 15356 / DSM 50701 / NCIMB 9529 / HD100), this protein is Guanylate kinase.